A 142-amino-acid polypeptide reads, in one-letter code: FAD synthase (142 aa).

Residues 9 to 10 (VF), 14 to 17 (HLGH), aspartate 93, and tyrosine 120 contribute to the ATP site.

This sequence belongs to the archaeal FAD synthase family. As to quaternary structure, homodimer. A divalent metal cation serves as cofactor.

It catalyses the reaction FMN + ATP + H(+) = FAD + diphosphate. The protein operates within cofactor biosynthesis; FAD biosynthesis; FAD from FMN: step 1/1. Catalyzes the transfer of the AMP portion of ATP to flavin mononucleotide (FMN) to produce flavin adenine dinucleotide (FAD) coenzyme. The chain is FAD synthase from Thermoplasma acidophilum (strain ATCC 25905 / DSM 1728 / JCM 9062 / NBRC 15155 / AMRC-C165).